The following is a 123-amino-acid chain: Neuropeptide-like peptides nlp-40 (123 aa).

The first 17 residues, 1–17, serve as a signal peptide directing secretion; the sequence is MKLVILLSFVATVAVFA. 3 propeptides span residues 30–31, 66–67, and 75–76; these read RA and KR.

As to expression, expressed in intestinal cells.

It localises to the secreted. Its subcellular location is the cytoplasmic vesicle. Its function is as follows. Neuropeptide ligand for the G-protein coupled receptor aex-2. Activates and regulates the rhythmic calcium influx in DVB GABergic neurons during the defecation motor program, which is a coordinated series of three muscle contractions that occurs every 45 seconds. The polypeptide is Neuropeptide-like peptides nlp-40 (Caenorhabditis elegans).